The chain runs to 59 residues: Toxin TxpA (59 aa).

A helical transmembrane segment spans residues 7 to 27; it reads LMVMIGFANLIGGIMTWVISL.

It is found in the cell membrane. Toxic component of a type I toxin-antitoxin (TA) system. Overexpression of txpA causes cell lysis; the TxpA protein has been suggested to act on the cell membrane or might possibly block cell wall synthesis. Overexpression in E.coli is not toxic. The protein is Toxin TxpA of Bacillus subtilis (strain 168).